Consider the following 235-residue polypeptide: Phosphoribosylaminoimidazole-succinocarboxamide synthase (235 aa).

The protein belongs to the SAICAR synthetase family.

The enzyme catalyses 5-amino-1-(5-phospho-D-ribosyl)imidazole-4-carboxylate + L-aspartate + ATP = (2S)-2-[5-amino-1-(5-phospho-beta-D-ribosyl)imidazole-4-carboxamido]succinate + ADP + phosphate + 2 H(+). It functions in the pathway purine metabolism; IMP biosynthesis via de novo pathway; 5-amino-1-(5-phospho-D-ribosyl)imidazole-4-carboxamide from 5-amino-1-(5-phospho-D-ribosyl)imidazole-4-carboxylate: step 1/2. The sequence is that of Phosphoribosylaminoimidazole-succinocarboxamide synthase from Clostridium botulinum (strain Eklund 17B / Type B).